Reading from the N-terminus, the 353-residue chain is uncharacterized protein (353 aa).

The signal sequence occupies residues 1–30 (MHLRHLFSPRLRGSLLLGSLLVASSFSTLA).

This is an uncharacterized protein from Salmonella typhimurium (strain LT2 / SGSC1412 / ATCC 700720).